A 350-amino-acid chain; its full sequence is Ribosome production factor 2 homolog (350 aa).

A Brix domain is found at 28–266 (KTCLFLRGTT…LGRMREPDPA (239 aa)). The segment covering 192–202 (PTSSTSTNNDG) has biased composition (polar residues). Disordered regions lie at residues 192-219 (PTSSTSTNNDGENPAPLPGMTDPRSIDP) and 301-350 (MGKT…KVKG).

The protein belongs to the RPF2 family. In terms of assembly, component of a hexameric 5S RNP precursor complex, composed of 5S RNA, RRS1, RPF2, RPL5, RPL11 and SYO1; this complex acts as a precursor for ribosome assembly.

It localises to the nucleus. The protein localises to the nucleolus. Involved in ribosomal large subunit assembly. The protein is Ribosome production factor 2 homolog of Chaetomium thermophilum (strain DSM 1495 / CBS 144.50 / IMI 039719) (Thermochaetoides thermophila).